The primary structure comprises 362 residues: 3-dehydroquinate synthase (362 aa).

Residues 70 to 75, 104 to 108, 128 to 129, lysine 141, lysine 150, and 168 to 171 each bind NAD(+); these read EGEQYK, GVIGD, TT, and TLTT. Positions 183, 246, and 263 each coordinate Zn(2+).

The protein belongs to the sugar phosphate cyclases superfamily. Dehydroquinate synthase family. Requires Co(2+) as cofactor. It depends on Zn(2+) as a cofactor. NAD(+) is required as a cofactor.

Its subcellular location is the cytoplasm. It catalyses the reaction 7-phospho-2-dehydro-3-deoxy-D-arabino-heptonate = 3-dehydroquinate + phosphate. It functions in the pathway metabolic intermediate biosynthesis; chorismate biosynthesis; chorismate from D-erythrose 4-phosphate and phosphoenolpyruvate: step 2/7. Its function is as follows. Catalyzes the conversion of 3-deoxy-D-arabino-heptulosonate 7-phosphate (DAHP) to dehydroquinate (DHQ). This is 3-dehydroquinate synthase from Histophilus somni (strain 2336) (Haemophilus somnus).